Consider the following 226-residue polypeptide: N-acetyltransferase family 8 member 3 (226 aa).

Helical transmembrane passes span Met-36–Ala-56 and Gly-58–Ala-78. The N-acetyltransferase domain maps to Leu-61–Thr-220.

It belongs to the camello family.

The protein resides in the nucleus membrane. It is found in the cytoplasm. Its subcellular location is the perinuclear region. It catalyses the reaction L-lysyl-[protein] + acetyl-CoA = N(6)-acetyl-L-lysyl-[protein] + CoA + H(+). In terms of biological role, has histone acetyltransferase activity in vitro, with specificity for histone H4. The sequence is that of N-acetyltransferase family 8 member 3 from Mus musculus (Mouse).